The chain runs to 3027 residues: MNLHQVLTGAVNPGDHCFSVGSIGDQRFTAYASGCDIVILGSDFERLQIIPGAKHGNIQVGCVDCSMQQGKIAASYGNVISIFEPVNLPKQKKNLELYSQWQKSGQFFLESIAHNITWDPTGSRLLTGSSYLQLWSNTNLEKPTEDENLNKTDLNFGDWKCIWHCKTASQVHLMKFSPDGEFFATAGKDDCLLKVWYNVENWRTAVTSPDGSSEKQSQGEIDFSFVYLAHPRAVNGFSWRKTSKYMPRASVCNVLLTCCKDNVCRLWVETFLPNDCLLYGGDCSHWTESINLTNNFKRNASSKERVQNALEVNLRHFRRGRRRSLALVAHTGYLPHQQDPHHVHRNTPLHANALCHFHIAASINPATDIPLLPSITSLSLNENEEKTGPFVVHWLNNKELHFTLSMEVFLQQLRKSFEQPSSEASVEDSNQADVKSDEETDDGVDDLKINPEKKELGCDKMVPNSSFTSLSSAAIDHQIEVLLSEWSKNADMLFSIHPMDGSLLVWHVDWLDEYQPGMFRQVQVSFVSRIPVAFPTGDANSLCKSIMMYACTKNVDLAIQQGKQKPSGLTRSTSMLISSGHNKSSNSLKLSIFTPNVMMISKHADGSLNQWLVSFAEESAFSTVLSISHKSRYCGHRFHLNDLACHSVLPLLLTTSHHNALRTPDVDNPEQPFDALNIEECSLTQQNKSTVDVAFQDPSAVYSELILWRVDPVGPLSFSGGVSELARINSLHVSAFSNVAWLPTLIPSYCLGAYCNSPSACFVASDGQYLRLYEAVIDAKKLLSELSNPEISKYVGEVFNIVSQQSTARPGCIIALDPITKLHGRKTQLLHVFEEDFILNNLEKKSLGKDSILSNAGSSPNGFSEKFYLIVIECTQDNRSLLHMWNLHLKSIPVSLDEKVDTKLSEAVWQPEEHYSSSPEKILSPFSQKYQACRANLQSTSRLTLFSEMVYSQELHLPEGVEIISIKPSAGHLSSSSIYPACSAPYLLATSCSDEKVRFWRCRVTDGESATSKNGKIDLAYIWEEWPLLIEDGLQSNSSITVPGRPVEVSCAHTNRLAVAYKQPASNSRSSQDFVMHVSIFECESTGGSCWVLEQTIHLDELSTVLDSGISVDSNLVAYNKQDMYLSSKENITSNTKHLVHLDWMSREDGSHILTVGIGSKLFMYGPLAGKVQDQTGKETLAFPLWESTKVVPLSKFVLLRSVDLVSSVDGSPPFPVSLSWVRDGILVVGMDCEMHVYCQWQPSSKQEPVITDSYSGSTPSITSLIKQSNSSSGLHPPKKTLTRSMTSLAQKICGKKTAFDPSVDMEDSGLFEAAHVLSPTLPQYHPLQLLELMDLGKVRRAKAILSHLVKCIAGEVVALNEAESNHERRLRSLTISASGSTTRDPQAFNKAENTDYTEIDSVPPLPLYALLAADDDSCYSSLEKSSNESTLSKSNQLSKESYDELFQTQLLMTDTHMLETDEENTKPRVIDLSQYSPTYFGPEHAQVLSGHLLHSSLPGLSRMEQMSLMALADTIATTSTDIGESRDRSQGGETLDECGLKFLLAVRLHTFLTTSLPAYRAQLLHQGLSTSHFAWAFHSVAEEELLNMLPAMQKDDPTWSELRAMGVGWWVRNTRILRKCIEKVAKAAFYRKNDPLDAAIFYLAMKKKAVIWGLYRAEKNTRMTQFFGHNFEDERWRKAALKNAFSLLGKQRFEHSAAFFLLAGCLRDAIEVCLEKLNDIQLALVIARLYESEFDTSAAYKSILRKKVLGIDSPVSELCSLNINMHHDPFLRSMAYWILEDYSGALETLIKQPIRENDDQVLSASNPTVFNFYNYLRTHPLLLRRHFGSSDTFSTHMSLTGKSGLAGTINLSERRLFFTTASAHLKAGCPMLALEVLSKMPKVIKKTRPFYRASSFLDTSKDCSPSSPLKLDAREDKSSAVDWSQSLINGFGSSSEGSSEKQSNSTLSFDWSQPSVVFQDDSLELKWDSDNDEENEDVPISMKELKPLQRKTDKKLDDISSNYTESFSTLDENDLLNPSEDIIAVQLKFRACLKILTVELRTLSTGYEIDGGKLRYQLYHWLEKEVIALQRTCDFCSDAEELQSAFGRNEDEFGLNEDAEDLPHQTKVKQLRENFQEKRQWLLKYQSLLRMFLSYCILHGSHGGGLASVRMELILLLQESQQETSEPLFSSPLSEQTSVPLLFACTANAKTVVANPLLHLSNLTHDILHAIINFDSPPHPDIQSNKVYVMHTLAASLSACIYQCLCGSHNYSSFQTNQFTGMVYQTVLLPHRPSLKTGSLDEALTPNTSPAQWPGITCLIRLLNSSGEEAQSGLTVLLCEILTAVYLSLFIHGLATHSSNELFRIVAHPLNEKMWSAVFGGGAHVPSKEQTHSKTLPVSSLVEEGEKQNKRFRPSKMSCRESAPLTPSSAPVSQESLAVKEKFIPPELSIWDYFIAKPFLPSSQSRAEYDSEESLGSDDDDNDDDDDVLASDFHLQEHSNSNSYSWSLMRLAMVQLVLNNLKTFYPFAGHDLAELPVSSPLCHAVLKTLQCWEQVLLRRLEIHGGPPQNYIASHTAEESLSAGPAILRHKALLEPTNTPFKSKHHLALSVKRLWQYLVKQEEIQETFIKNIFTKKRCLNEIEADLGYPGGKARIIHKESDIITAFAVNKANRNCIAIASSHDVQELDVSGILATQVYTWVDDDIEVETKGSEDFLVIHARDDLTAVQGTTPYTHSNPGTPINMPWLGSTQTGRGASVMIKKAINNVRRMTSHPTLPYYLTGAQDGSVRMFEWGHSQQITCFRSGGNSRVTRMRFNYQGNKFGIVDADGYLSLYQTNWKCCPVTGSMPKPYLTWQCHNKTANDFVFVSSSSLIATAGLSTDNRNVCLWDTLVAPANSLVHAFTCHDSGATVLAYAPKHQLLISGGRKGFTYVFDLCQRQQRQLFQSHDSPVKAVAVDPTEEYFVTGSAEGNIKIWSLSTFGLLHTFVSEHARQSIFRNIGTGVMQIETGPANHIFSCGADGTMKMRILPDQFSPLNEVLKNDVKFML.

WD repeat units lie at residues 108–145 (FLES…KPTE), 166–206 (KTAS…RTAV), and 229–277 (AHPR…NDCL). Residues Ser-324, Ser-422, Ser-425, and Ser-436 each carry the phosphoserine modification. The span at 420 to 433 (PSSEASVEDSNQAD) shows a compositional bias: polar residues. The tract at residues 420 to 450 (PSSEASVEDSNQADVKSDEETDDGVDDLKIN) is disordered. The WD 4 repeat unit spans residues 476–516 (DHQIEVLLSEWSKNADMLFSIHPMDGSLLVWHVDWLDEYQP). The disordered stretch occupies residues 563-584 (KQKPSGLTRSTSMLISSGHNKS). A Phosphoserine modification is found at Ser-574. WD repeat units follow at residues 580 to 621 (GHNK…ESAF), 628 to 665 (SHKS…RTPD), and 848 to 895 (GKDS…IPVS). 2 positions are modified to phosphoserine: Ser-918 and Ser-924. WD repeat units lie at residues 968–1010 (PSAG…GESA), 1134–1175 (SNTK…VQDQ), and 1211–1251 (GSPP…EPVI). Phosphoserine occurs at positions 1830, 1896, 1908, and 1970. Disordered regions lie at residues 2367-2412 (PSKE…SSAP) and 2446-2468 (SRAE…DDDD). Residues 2451 to 2468 (DSEESLGSDDDDNDDDDD) show a composition bias toward acidic residues. WD repeat units follow at residues 2742-2783 (KAIN…TCFR), 2785-2824 (GGNS…CPVT), 2836-2878 (CHNK…ANSL), 2884-2923 (CHDS…QRQL), 2926-2965 (SHDS…LLHT), and 2978-3016 (NIGT…SPLN).

As to expression, expressed in bone, breast, eye, foreskin, heart, parathyroid, small intestine, testis, tonsils, placenta and uterus.

The sequence is that of DmX-like protein 1 (DMXL1) from Homo sapiens (Human).